Here is a 149-residue protein sequence, read N- to C-terminus: Large ribosomal subunit protein uL15 (149 aa).

2 stretches are compositionally biased toward basic residues: residues 1–14 and 21–30; these read MPSR…HRGH and RIGKHRKHPG. The tract at residues 1-39 is disordered; that stretch reads MPSRFTKTRKHRGHVSAGKGRIGKHRKHPGGRGMAGGQH. Short sequence motifs (nuclear localization signal) lie at residues 7-13 and 24-30; these read KTRKHRG and KHRKHPG. A Glycyl lysine isopeptide (Lys-Gly) (interchain with G-Cter in ubiquitin) cross-link involves residue Lys96.

This sequence belongs to the universal ribosomal protein uL15 family. Component of the large ribosomal subunit (LSU). Mature yeast ribosomes consist of a small (40S) and a large (60S) subunit. The 40S small subunit contains 1 molecule of ribosomal RNA (18S rRNA) and 33 different proteins (encoded by 57 genes). The large 60S subunit contains 3 rRNA molecules (25S, 5.8S and 5S rRNA) and 46 different proteins (encoded by 81 genes).

The protein resides in the cytoplasm. Its function is as follows. Component of the ribosome, a large ribonucleoprotein complex responsible for the synthesis of proteins in the cell. The small ribosomal subunit (SSU) binds messenger RNAs (mRNAs) and translates the encoded message by selecting cognate aminoacyl-transfer RNA (tRNA) molecules. The large subunit (LSU) contains the ribosomal catalytic site termed the peptidyl transferase center (PTC), which catalyzes the formation of peptide bonds, thereby polymerizing the amino acids delivered by tRNAs into a polypeptide chain. The nascent polypeptides leave the ribosome through a tunnel in the LSU and interact with protein factors that function in enzymatic processing, targeting, and the membrane insertion of nascent chains at the exit of the ribosomal tunnel. The protein is Large ribosomal subunit protein uL15 of Saccharomyces cerevisiae (strain ATCC 204508 / S288c) (Baker's yeast).